We begin with the raw amino-acid sequence, 781 residues long: Cytosolic phospholipase A2 beta (781 aa).

Positions 1–112 (MAVAEVSRTC…RAGEFRRESF (112 aa)) constitute a C2 domain. Positions 26, 32, 82, 84, and 90 each coordinate Ca(2+). The region spanning 246 to 781 (EAGLRELAVR…VQRRRQRRPH (536 aa)) is the PLA2c domain. Residue S335 is the Nucleophile of the active site. Residue D615 is the Proton acceptor of the active site.

Requires Ca(2+) as cofactor. In terms of tissue distribution, widely expressed. Expressed at higher level in brain, heart, liver, cerebellum and pancreas.

It localises to the cytoplasm. It is found in the cytosol. The protein resides in the mitochondrion membrane. The protein localises to the early endosome membrane. The catalysed reaction is a 1,2-diacyl-sn-glycero-3-phosphocholine + H2O = a 1-acyl-sn-glycero-3-phosphocholine + a fatty acid + H(+). It carries out the reaction a 1-acyl-sn-glycero-3-phosphocholine + H2O = sn-glycerol 3-phosphocholine + a fatty acid + H(+). The enzyme catalyses 1-hexadecanoyl-2-(9Z,12Z-octadecadienoyl)-sn-glycero-3-phosphoethanolamine + H2O = 1-hexadecanoyl-sn-glycero-3-phosphoethanolamine + (9Z,12Z)-octadecadienoate + H(+). It catalyses the reaction 1-hexadecanoyl-2-(5Z,8Z,11Z,14Z-eicosatetraenoyl)-sn-glycero-3-phosphoethanolamine + H2O = 1-hexadecanoyl-sn-glycero-3-phosphoethanolamine + (5Z,8Z,11Z,14Z)-eicosatetraenoate + H(+). The catalysed reaction is 1-hexadecanoyl-sn-glycero-3-phosphocholine + H2O = sn-glycerol 3-phosphocholine + hexadecanoate + H(+). It carries out the reaction 1-hexadecanoyl-2-(5Z,8Z,11Z,14Z-eicosatetraenoyl)-sn-glycero-3-phosphocholine + H2O = 1-hexadecanoyl-sn-glycero-3-phosphocholine + (5Z,8Z,11Z,14Z)-eicosatetraenoate + H(+). The enzyme catalyses 1-hexadecanoyl-2-(5Z,8Z,11Z,14Z-eicosatetraenoyl)-sn-glycero-3-phosphocholine + H2O = 2-(5Z,8Z,11Z,14Z)-eicosatetraenoyl-sn-glycero-3-phosphocholine + hexadecanoate + H(+). With respect to regulation, stimulated by cytosolic Ca(2+). In terms of biological role, calcium-dependent phospholipase A1 and A2 and lysophospholipase that may play a role in membrane phospholipid remodeling. Functionally, calcium-dependent phospholipase A2 and lysophospholipase. Cleaves the ester bond of the fatty acyl group attached to the sn-2 position of phosphatidylethanolamines, producing lysophospholipids that may be used in deacylation-reacylation cycles. Hydrolyzes lysophosphatidylcholines with low efficiency but is inefficient toward phosphatidylcholines. Its function is as follows. Calcium-dependent phospholipase A1 and A2 and lysophospholipase. Cleaves the ester bond of the fatty acyl group attached to the sn-1 or sn-2 position of diacyl phospholipids (phospholipase A1 and A2 activity, respectively), producing lysophospholipids that may be used in deacylation-reacylation cycles. Can further hydrolyze lysophospholipids enabling complete deacylation. Has no activity toward alkylacyl phospholipids. The protein is Cytosolic phospholipase A2 beta (PLA2G4B) of Homo sapiens (Human).